Here is a 221-residue protein sequence, read N- to C-terminus: MATVHYSRRPGTPPVTLTSSPGMDDVATPIPYLPTYAEAVADAPPPYRSRESLVFSPPLFPHVENGTTQQSYDCLDCAYDGIHRLQLAFLRIRKCCVPAFLILFGILTLTAVVVAIVAVFPEEPPNSTTRNYCPEGEGIYSRLQLVARVCTTKAIYVTKANVAIWSTTPSTLHNLSICIFSCADAFLRDRGLGTSTSGIRTAGGLARTTSGDALFCISSVC.

Positions 1–22 are disordered; the sequence is MATVHYSRRPGTPPVTLTSSPG. The short motif at 44–47 is the PPXY motif element; sequence PPPY. A helical membrane pass occupies residues 100-120; the sequence is FLILFGILTLTAVVVAIVAVF.

It belongs to the varicellovirus ORF0 protein family. In terms of assembly, interacts with host ITCH; this interaction probably mediates ITCH degradation.

It is found in the host Golgi apparatus membrane. This is Membrane protein 0 from Homo sapiens (Human).